Reading from the N-terminus, the 476-residue chain is Sulfate adenylyltransferase subunit 1 (476 aa).

Positions 24 to 240 (KSLLRFLTCG…LENVDIDRDK (217 aa)) constitute a tr-type G domain. Residues 33–40 (GSVDDGKS) form a G1 region. 33-40 (GSVDDGKS) serves as a coordination point for GTP. The segment at 91–95 (GITID) is G2. A G3 region spans residues 112 to 115 (DTPG). GTP-binding positions include 112–116 (DTPGH) and 167–170 (NKMD). Positions 167-170 (NKMD) are G4. Residues 205–207 (SAL) form a G5 region.

Belongs to the TRAFAC class translation factor GTPase superfamily. Classic translation factor GTPase family. CysN/NodQ subfamily. Heterodimer composed of CysD, the smaller subunit, and CysN.

The catalysed reaction is sulfate + ATP + H(+) = adenosine 5'-phosphosulfate + diphosphate. The protein operates within sulfur metabolism; hydrogen sulfide biosynthesis; sulfite from sulfate: step 1/3. In terms of biological role, with CysD forms the ATP sulfurylase (ATPS) that catalyzes the adenylation of sulfate producing adenosine 5'-phosphosulfate (APS) and diphosphate, the first enzymatic step in sulfur assimilation pathway. APS synthesis involves the formation of a high-energy phosphoric-sulfuric acid anhydride bond driven by GTP hydrolysis by CysN coupled to ATP hydrolysis by CysD. This is Sulfate adenylyltransferase subunit 1 from Vibrio cholerae serotype O1 (strain ATCC 39541 / Classical Ogawa 395 / O395).